A 203-amino-acid polypeptide reads, in one-letter code: Ribosomal RNA large subunit methyltransferase E (203 aa).

Gly-60, Trp-62, Asp-79, Asp-95, and Asp-119 together coordinate S-adenosyl-L-methionine. Lys-159 (proton acceptor) is an active-site residue.

Belongs to the class I-like SAM-binding methyltransferase superfamily. RNA methyltransferase RlmE family.

It is found in the cytoplasm. The enzyme catalyses uridine(2552) in 23S rRNA + S-adenosyl-L-methionine = 2'-O-methyluridine(2552) in 23S rRNA + S-adenosyl-L-homocysteine + H(+). Functionally, specifically methylates the uridine in position 2552 of 23S rRNA at the 2'-O position of the ribose in the fully assembled 50S ribosomal subunit. In Pelagibacter ubique (strain HTCC1062), this protein is Ribosomal RNA large subunit methyltransferase E.